The sequence spans 349 residues: T-cell immunoglobulin and mucin domain-containing protein 2 (349 aa).

An N-terminal signal peptide occupies residues 1 to 20 (MVQLQVFISGLLLLLPGAVA). The Extracellular segment spans residues 21–275 (SYTVVQGHSV…QKLQRNPTKG (255 aa)). Positions 22 to 123 (YTVVQGHSVT…AFYFVDYLLE (102 aa)) constitute an Ig-like V-type domain. 3 cysteine pairs are disulfide-bonded: C34–C107, C48–C59, and C54–C106. N-linked (GlcNAc...) asparagine glycans are attached at residues N84 and N89. The interval 128-271 (LPTSPPTRPT…AIPPQKLQRN (144 aa)) is disordered. The span at 136-215 (PTNTGRPTTT…TSTPPTPEQT (80 aa)) shows a compositional bias: low complexity. A compositionally biased stretch (polar residues) spans 222–260 (ATTYYPDQTTAEVTEAPSHTPTDWNNTATSSDDSWNSDT). Residues 276–296 (FYVGMSFAALLLLLLASTVAI) form a helical membrane-spanning segment. Over 297–349 (TRYMVMRKNSGSLRFVAFPVSKIGASQNKVVEQARIEDEVYIIEDSPYFEEES) the chain is Cytoplasmic.

The protein belongs to the immunoglobulin superfamily. TIM family. As to quaternary structure, homodimer.

The protein localises to the cell membrane. In terms of biological role, probable receptor for SEMA4A involved in the regulation of T-cell function. The interaction with SEMA4A enhances T-cell activation. This chain is T-cell immunoglobulin and mucin domain-containing protein 2 (Timd2), found in Rattus norvegicus (Rat).